The chain runs to 126 residues: Small ribosomal subunit protein uS12 (126 aa).

Residues 1 to 26 (MPTINQLVRKGRASETTKSKSPALQD) form a disordered region. Aspartate 89 bears the 3-methylthioaspartic acid mark. The tract at residues 102-126 (LDTQGVKDRRQARSKYGAKRAKAAK) is disordered. Residues 113–126 (ARSKYGAKRAKAAK) show a composition bias toward basic residues.

This sequence belongs to the universal ribosomal protein uS12 family. In terms of assembly, part of the 30S ribosomal subunit. Contacts proteins S8 and S17. May interact with IF1 in the 30S initiation complex.

Its function is as follows. With S4 and S5 plays an important role in translational accuracy. Interacts with and stabilizes bases of the 16S rRNA that are involved in tRNA selection in the A site and with the mRNA backbone. Located at the interface of the 30S and 50S subunits, it traverses the body of the 30S subunit contacting proteins on the other side and probably holding the rRNA structure together. The combined cluster of proteins S8, S12 and S17 appears to hold together the shoulder and platform of the 30S subunit. The chain is Small ribosomal subunit protein uS12 from Burkholderia mallei (strain ATCC 23344).